A 135-amino-acid polypeptide reads, in one-letter code: Large ribosomal subunit protein uL16c (135 aa).

The protein belongs to the universal ribosomal protein uL16 family. As to quaternary structure, part of the 50S ribosomal subunit.

It is found in the plastid. The protein localises to the chloroplast. The sequence is that of Large ribosomal subunit protein uL16c from Nymphaea alba (White water-lily).